Here is a 133-residue protein sequence, read N- to C-terminus: Large ribosomal subunit protein bL17 (133 aa).

It belongs to the bacterial ribosomal protein bL17 family. Part of the 50S ribosomal subunit. Contacts protein L32.

The polypeptide is Large ribosomal subunit protein bL17 (Alteromonas mediterranea (strain DSM 17117 / CIP 110805 / LMG 28347 / Deep ecotype)).